The primary structure comprises 178 residues: Protein FLOWERING LOCUS T 1 (178 aa).

It belongs to the phosphatidylethanolamine-binding protein family. Expressed in leaves but not in shoot apex.

Involved in the regulation of vernalization and of flowering time. The chain is Protein FLOWERING LOCUS T 1 from Brachypodium distachyon (Purple false brome).